A 597-amino-acid polypeptide reads, in one-letter code: Elongation factor 4 (597 aa).

The 183-residue stretch at 2 to 184 (KNIRNFSIIA…SIVEHLPAPE (183 aa)) folds into the tr-type G domain. GTP-binding positions include 14–19 (DHGKST) and 131–134 (NKID).

Belongs to the TRAFAC class translation factor GTPase superfamily. Classic translation factor GTPase family. LepA subfamily.

It is found in the cell inner membrane. It catalyses the reaction GTP + H2O = GDP + phosphate + H(+). In terms of biological role, required for accurate and efficient protein synthesis under certain stress conditions. May act as a fidelity factor of the translation reaction, by catalyzing a one-codon backward translocation of tRNAs on improperly translocated ribosomes. Back-translocation proceeds from a post-translocation (POST) complex to a pre-translocation (PRE) complex, thus giving elongation factor G a second chance to translocate the tRNAs correctly. Binds to ribosomes in a GTP-dependent manner. This is Elongation factor 4 from Desulfotalea psychrophila (strain LSv54 / DSM 12343).